A 320-amino-acid polypeptide reads, in one-letter code: MGMVGLRDVFLVAPAYHHQNAGVISGSDHMNSNAAAAAALGVGVIPLLTAGTPQQNVEDSDINFLGNNRRWQNNNNNHETQYLHFKSTNQTTVGTSSNNSGSGSGASGTATCQDCGNQAKKECKQRRCRTCCKSRGFDCSTHVKSTWVSAARRRERQVMPTGANPTAGSSLSTSSGTKKPRIVGSQQQQQQQATSHTSTSNTPPQSFETSSSRQDGGGSREAWPGQVRAAAVFKCVRVTAVEDGDDEYAYQAVVKIGGHVFKGFLYDQGLEPKEGFPSMSDLHLGGSANNHNGVSASAPILDPPNVVYGGGGGSGGGFYS.

The tract at residues 90–110 (QTTVGTSSNNSGSGSGASGTA) is disordered. Residues C112, C115, C123, C128, C132, and C139 each contribute to the Zn(2+) site. The segment at residues 112-139 (CQDCGNQAKKECKQRRCRTCCKSRGFDC) is a DNA-binding region (zn(2)-C6 fungal-type; degenerate). The tract at residues 150 to 223 (AARRRERQVM…QDGGGSREAW (74 aa)) is disordered. The span at 168–177 (GSSLSTSSGT) shows a compositional bias: low complexity. The segment covering 193 to 214 (ATSHTSTSNTPPQSFETSSSRQ) has biased composition (polar residues). The Required for homo- and heterodimerization motif lies at 256–259 (IGGH).

It belongs to the SHI protein family. Homodimer. Restricted to lateral root primordia.

Its subcellular location is the nucleus. Its function is as follows. Transcription activator that binds DNA on 5'-ACTCTAC-3' and promotes auxin homeostasis-regulating gene expression (e.g. YUC genes), as well as genes affecting stamen development, cell expansion and timing of flowering. Synergistically with other SHI-related proteins, regulates gynoecium, stamen and leaf development in a dose-dependent manner, controlling apical-basal patterning. Promotes style and stigma formation, and influence vascular development during gynoecium development. May also have a role in the formation and/or maintenance of the shoot apical meristem (SAM). Modulates root growth. The sequence is that of Protein LATERAL ROOT PRIMORDIUM 1 (LRP1) from Arabidopsis thaliana (Mouse-ear cress).